We begin with the raw amino-acid sequence, 114 residues long: Iron-sulfur cluster insertion protein ErpA (114 aa).

Residues C42, C106, and C108 each contribute to the iron-sulfur cluster site.

The protein belongs to the HesB/IscA family. In terms of assembly, homodimer. The cofactor is iron-sulfur cluster.

Required for insertion of 4Fe-4S clusters for at least IspG. The chain is Iron-sulfur cluster insertion protein ErpA from Erwinia tasmaniensis (strain DSM 17950 / CFBP 7177 / CIP 109463 / NCPPB 4357 / Et1/99).